A 151-amino-acid chain; its full sequence is Large ribosomal subunit protein uL15 (151 aa).

Positions 1–58 (MELNQLKSVPKARNHKTKTLGRGHGSGLGKTSGRGQKGQKARKSGLTRPGFEGGQTPL) are disordered. Residues 10 to 21 (PKARNHKTKTLG) are compositionally biased toward basic residues. Gly residues predominate over residues 22–36 (RGHGSGLGKTSGRGQ).

This sequence belongs to the universal ribosomal protein uL15 family. As to quaternary structure, part of the 50S ribosomal subunit.

Functionally, binds to the 23S rRNA. In Mycoplasma pneumoniae (strain ATCC 29342 / M129 / Subtype 1) (Mycoplasmoides pneumoniae), this protein is Large ribosomal subunit protein uL15.